Reading from the N-terminus, the 384-residue chain is Secreted LysM effector LysM14 (384 aa).

Positions M1–A35 are cleaved as a signal peptide. The region spanning Y64 to L112 is the LysM domain. The segment at S185–T220 is disordered.

Belongs to the secreted LysM effector family.

It is found in the secreted. Secreted LysM effector that might have a role in sequestration of chitin oligosaccharides (breakdown products of fungal cell walls that are released during invasion and act as triggers of host immunity) to dampen host defense. This chain is Secreted LysM effector LysM14, found in Penicillium expansum (Blue mold rot fungus).